The primary structure comprises 1265 residues: Protein FAM193A (1265 aa).

Residues 107–142 adopt a coiled-coil conformation; sequence SEDTYSTLLQRYQRSEEELRRVAEEWLECQKRIDAY. Residues 247-272 are disordered; the sequence is APDYLAERSPPSVSSASSGSGSSSPI. The span at 255–271 shows a compositional bias: low complexity; the sequence is SPPSVSSASSGSGSSSP. A Phosphoserine modification is found at Ser-293. 7 disordered regions span residues 331–407, 553–586, 626–674, 750–785, 822–841, 859–881, and 893–1163; these read NGGG…EQAP, GSEI…SKEK, VQSS…APLP, ENGV…NQKE, LTKR…ERES, ETKP…KLEE, and EHLH…DRVN. Acidic residues predominate over residues 355 to 365; the sequence is EADDEEADGES. Ser-383 carries the phosphoserine modification. Ser-642 is modified (phosphoserine). Positions 757-769 are enriched in acidic residues; the sequence is QQDDGDESADEDS. Over residues 772–781 the composition is skewed to low complexity; it reads EHSSSTSTST. Positions 868–877 are enriched in basic residues; the sequence is AAKRARHKQR. The stretch at 873 to 932 forms a coiled coil; sequence RHKQRKLEEKARLEAEARAREHLHLQEEQRRREEEEDEEEEEDRFKEEFQRLQELQKLRA. Composition is skewed to basic and acidic residues over residues 893–905 and 915–929; these read EHLH…RRRE and DRFK…ELQK. The span at 931–940 shows a compositional bias: basic residues; sequence RAVKKKKKER. Residues 953–973 show a composition bias toward polar residues; that stretch reads RNFQAATESVPNSGNIHNGSL. Residues 1093 to 1118 are a coiled coil; it reads TEQKREERKVNSNNNNKKQLNHIKDE. A phosphoserine mark is found at Ser-1129 and Ser-1144. Residues 1149–1159 are compositionally biased toward basic residues; sequence GKNKKNKKKKG.

The protein belongs to the FAM193 family.

The chain is Protein FAM193A (FAM193A) from Homo sapiens (Human).